The chain runs to 121 residues: Large ribosomal subunit protein uL18 (121 aa).

Belongs to the universal ribosomal protein uL18 family. Part of the 50S ribosomal subunit; part of the 5S rRNA/L5/L18/L25 subcomplex. Contacts the 5S and 23S rRNAs.

Functionally, this is one of the proteins that bind and probably mediate the attachment of the 5S RNA into the large ribosomal subunit, where it forms part of the central protuberance. This is Large ribosomal subunit protein uL18 from Streptococcus suis (strain 98HAH33).